Consider the following 631-residue polypeptide: MSATKLTRREQRAQAQHFIDTLEGSAFPNSKRIYITGTQPGVRVPMREIQLSPTLIGGSKEQPQYEENEAIPVYDTSGPYGDPQIAINVQQGLAKLRQPWIDARGDTEELTVRSSDYTKARLADDGLDELRFSGVLTPKRAKAGRRVTQLHYARKGIITPEMEFIAIRENMGRERIRSEVLRHQHPGMSFGARLPENITAEFVRDEVAAGRAIIPANINHPESEPMIIGRNFLVKVNANIGNSAVTSSIEEEVEKLVWSTRWGADTVMDLSTGRYIHETREWILRNSPVPIGTVPIYQALEKVNGIAEDLTWEAFRDTLLEQAEQGVDYFTIHAGVLLRYVPMTAKRLTGIVSRGGSIMAKWCLSHHQENFLYQHFREICEICAAYDVSLSLGDGLRPGSIQDANDEAQFAELHTLGELTKIAWEYDVQVMIEGPGHVPMQMIRRNMTEELEHCHEAPFYTLGPLTTDIAPGYDHFTSGIGAAMIGWFGCAMLCYVTPKEHLGLPNKEDVKQGLITYKIAAHAADLAKGHPGAQIRDNAMSKARFEFRWEDQFNLALDPFTARAYHDETLPQESGKVAHFCSMCGPKFCSMKISQEVRDYAAAQTIEVGMADMSENFRARGGEIYLRKEEA.

Substrate is bound by residues Asn239, Met268, Tyr297, His333, 353-355 (SRG), 394-397 (DGLR), and Glu433. Residue His437 participates in Zn(2+) binding. Position 460 (Tyr460) interacts with substrate. Position 501 (His501) interacts with Zn(2+). Residues Cys581, Cys584, and Cys589 each contribute to the [4Fe-4S] cluster site.

It belongs to the ThiC family. In terms of assembly, homodimer. The cofactor is [4Fe-4S] cluster.

It carries out the reaction 5-amino-1-(5-phospho-beta-D-ribosyl)imidazole + S-adenosyl-L-methionine = 4-amino-2-methyl-5-(phosphooxymethyl)pyrimidine + CO + 5'-deoxyadenosine + formate + L-methionine + 3 H(+). It participates in cofactor biosynthesis; thiamine diphosphate biosynthesis. In terms of biological role, catalyzes the synthesis of the hydroxymethylpyrimidine phosphate (HMP-P) moiety of thiamine from aminoimidazole ribotide (AIR) in a radical S-adenosyl-L-methionine (SAM)-dependent reaction. This is Phosphomethylpyrimidine synthase from Escherichia coli O127:H6 (strain E2348/69 / EPEC).